A 48-amino-acid polypeptide reads, in one-letter code: ATP synthase protein 8 (48 aa).

The helical transmembrane segment at 13-32 (LVYGFALVTILLVLFAQYFL) threads the bilayer.

The protein belongs to the ATPase protein 8 family. In terms of assembly, F-type ATPases have 2 components, CF(1) - the catalytic core - and CF(0) - the membrane proton channel.

It is found in the mitochondrion membrane. Functionally, mitochondrial membrane ATP synthase (F(1)F(0) ATP synthase or Complex V) produces ATP from ADP in the presence of a proton gradient across the membrane which is generated by electron transport complexes of the respiratory chain. F-type ATPases consist of two structural domains, F(1) - containing the extramembraneous catalytic core and F(0) - containing the membrane proton channel, linked together by a central stalk and a peripheral stalk. During catalysis, ATP synthesis in the catalytic domain of F(1) is coupled via a rotary mechanism of the central stalk subunits to proton translocation. Part of the complex F(0) domain. Minor subunit located with subunit a in the membrane. The protein is ATP synthase protein 8 (ATP8) of Kluyveromyces lactis (strain ATCC 8585 / CBS 2359 / DSM 70799 / NBRC 1267 / NRRL Y-1140 / WM37) (Yeast).